Reading from the N-terminus, the 148-residue chain is 3-hydroxyacyl-[acyl-carrier-protein] dehydratase FabZ (148 aa).

The active site involves H48.

It belongs to the thioester dehydratase family. FabZ subfamily.

It localises to the cytoplasm. The catalysed reaction is a (3R)-hydroxyacyl-[ACP] = a (2E)-enoyl-[ACP] + H2O. Involved in unsaturated fatty acids biosynthesis. Catalyzes the dehydration of short chain beta-hydroxyacyl-ACPs and long chain saturated and unsaturated beta-hydroxyacyl-ACPs. The chain is 3-hydroxyacyl-[acyl-carrier-protein] dehydratase FabZ from Campylobacter concisus (strain 13826).